The chain runs to 577 residues: DNA primase (577 aa).

The CHC2-type zinc-finger motif lies at 40–64 (CPFHHDKTPSFTVSNEKQFYYCFGC). The Toprim domain occupies 255-337 (VYLLVVEGYI…KKTLKFILLP (83 aa)). 3 residues coordinate Mg(2+): Glu-261, Asp-305, and Asp-307.

This sequence belongs to the DnaG primase family. Monomer. Interacts with DnaB. Requires Zn(2+) as cofactor. The cofactor is Mg(2+).

It carries out the reaction ssDNA + n NTP = ssDNA/pppN(pN)n-1 hybrid + (n-1) diphosphate.. In terms of biological role, RNA polymerase that catalyzes the synthesis of short RNA molecules used as primers for DNA polymerase during DNA replication. This is DNA primase from Buchnera aphidicola subsp. Acyrthosiphon pisum (strain APS) (Acyrthosiphon pisum symbiotic bacterium).